A 796-amino-acid chain; its full sequence is MGDGALIVAVAIKGNNSKTKGVVRWALQEFASQEHVVFKLLHVQPRDSNSVSTTRKDLTTSVYKKDVDRKTREMLLPSRDMFVHREVQLDIMVLESDDIADAISKAVQDHGISELVIGASSSIIFSWKLKRSNLSSRIADATPRFCSVHVISKGKLLNVRKSDMDTETSIADDRSESRFSSDSHSGTVSSTSSHQFSSTPLLFQRIQALTTVNQKVGTNIGKQNNEPHHHHHNRAGSLDVDESKLLNQKGFYRTSSSGIGYGGSDISSWRSSQMEEASSSSTYSDPTSSSSQIHKDFELEKLKIELRHIKGMYAVAQSEVIDASKKMQDLNQRRSEEATRLKNLTIREEEADEVVEMERERQEDAENEAELVRECIERETEERLEAEARAEEVRKEKQRLEDALEGGPLQRQQYMKFEWEEIVEATSSFSDELKIGVGGYGSVYRCNLHHTTVAVKVLHSDKSSLTKQFHQELEILSKIRHPHLLLLLGACPERGSLVYEYMHNGSLEERLMKRRPNVDTPQPPPLRWFERFRIAWEIASALYFLHTNEPRPIVHRDLKPANILLDRNNVSKIGDVGLSKMVNLDPSHASTVFNETGPVGTFFYIDPEYQRTGVVTPESDIYAFGIILLQLVTARSAMGLAHSIEKALRDQTGKFTEILDKTAGDWPVKEAKEMVMIGLRCAEMRKRDRPDLGKEILPVLERLKEVASIARNMFADNLIDHHHNAPTHFYCPITKDVMENPCVASDGYTYEKRAIKEWLQKNHKSPMTDLPFPSDSLLPNHSLLSAIKEWRSQLIK.

Disordered regions lie at residues 163–195 (DMDTETSIADDRSESRFSSDSHSGTVSSTSSHQ), 218–240 (TNIGKQNNEPHHHHHNRAGSLDV), and 270–292 (RSSQMEEASSSSTYSDPTSSSSQ). A compositionally biased stretch (basic and acidic residues) spans 171–181 (ADDRSESRFSS). Positions 182 to 195 (DSHSGTVSSTSSHQ) are enriched in low complexity. Residues 270–291 (RSSQMEEASSSSTYSDPTSSSS) are compositionally biased toward low complexity. A coiled-coil region spans residues 298-407 (ELEKLKIELR…QRLEDALEGG (110 aa)). In terms of domain architecture, Protein kinase spans 429–700 (FSDELKIGVG…DLGKEILPVL (272 aa)). Residues 435–443 (IGVGGYGSV) and Lys-456 contribute to the ATP site. The active-site Proton acceptor is the Asp-557. In terms of domain architecture, U-box spans 724–796 (NAPTHFYCPI…IKEWRSQLIK (73 aa)).

This sequence belongs to the protein kinase superfamily. Ser/Thr protein kinase family.

The enzyme catalyses L-seryl-[protein] + ATP = O-phospho-L-seryl-[protein] + ADP + H(+). The catalysed reaction is L-threonyl-[protein] + ATP = O-phospho-L-threonyl-[protein] + ADP + H(+). It carries out the reaction S-ubiquitinyl-[E2 ubiquitin-conjugating enzyme]-L-cysteine + [acceptor protein]-L-lysine = [E2 ubiquitin-conjugating enzyme]-L-cysteine + N(6)-ubiquitinyl-[acceptor protein]-L-lysine.. It functions in the pathway protein modification; protein ubiquitination. Its function is as follows. Functions as an E3 ubiquitin ligase. This is U-box domain-containing protein 51 (PUB51) from Arabidopsis thaliana (Mouse-ear cress).